Consider the following 580-residue polypeptide: Frizzled-10-B (580 aa).

The first 20 residues, 1 to 20 (MEPRVVTALLLSLAAALCSG), serve as a signal peptide directing secretion. The Extracellular portion of the chain corresponds to 21-224 (ISSINPDRSG…DVYWSKNDKK (204 aa)). The FZ domain occupies 29 to 150 (SGEGRCQAIE…NDPNYLCMEA (122 aa)). Cystine bridges form between C34/C95, C42/C88, C79/C117, C106/C147, and C110/C134. N-linked (GlcNAc...) asparagine glycosylation is present at N48. Residue N153 is glycosylated (N-linked (GlcNAc...) asparagine). The tract at residues 173–194 (RPNSGHEMYPKDPKGRSSCENS) is disordered. Positions 180–189 (MYPKDPKGRS) are enriched in basic and acidic residues. A helical membrane pass occupies residues 225–245 (FAFIWIAIWSLLCFFSSAFTV). Topologically, residues 246-261 (LTFLVDPLRFKYPERP) are cytoplasmic. Residues 262-282 (IIFLSMCYCVYSVGYIIRLFA) form a helical membrane-spanning segment. Residues 283-309 (GADSIACDRDSGQLYVIQEGLESTGCT) are Extracellular-facing. Residues 310–330 (IVFLILYYFGMASSLWWVILT) form a helical membrane-spanning segment. The Cytoplasmic segment spans residues 331–350 (LTWFLAAGKKWGHEAIEANS). A helical membrane pass occupies residues 351 to 371 (SYFHLAAWAIPAVKTIMILVM). Over 372 to 392 (RRVAGDELTGVCYVGSMDVNA) the chain is Extracellular. A helical transmembrane segment spans residues 393–413 (LTGFVLIPLACYLIIGTSFIL). At 414-442 (SGFVALFHIRRVMKTGGENTDKLEKLMVR) the chain is on the cytoplasmic side. Residues 443–463 (IGVFSVLYTVPATCVIACYFY) traverse the membrane as a helical segment. Over 464–501 (ERLNMDFWKILATQDKCKMDSQTKTLDCTMTSSIPAVE) the chain is Extracellular. The chain crosses the membrane as a helical span at residues 502 to 522 (IFMVKIFMLLVVGITSGMWIW). Residues 523–580 (TSKTVQSWQNVFSKSLKKRNRNKPASVITSAGIYKKPQQPPKIHHGKYESALRSPTCV) lie on the Cytoplasmic side of the membrane. Positions 525–530 (KTVQSW) match the Lys-Thr-X-X-X-Trp motif, mediates interaction with the PDZ domain of Dvl family members motif. A disordered region spans residues 558–580 (KPQQPPKIHHGKYESALRSPTCV). A PDZ-binding motif is present at residues 578 to 580 (TCV).

Belongs to the G-protein coupled receptor Fz/Smo family. Expressed in liver, lung, brain, testis, heart and ovary.

Its subcellular location is the cell membrane. Receptor for Wnt proteins. Most of frizzled receptors are coupled to the beta-catenin canonical signaling pathway, which leads to the activation of disheveled proteins, inhibition of GSK-3 kinase, nuclear accumulation of beta-catenin and activation of Wnt target genes. A second signaling pathway involving PKC and calcium fluxes has been seen for some family members, but it is not yet clear if it represents a distinct pathway or if it can be integrated in the canonical pathway, as PKC seems to be required for Wnt-mediated inactivation of GSK-3 kinase. Both pathways seem to involve interactions with G-proteins. May be involved in transduction and intercellular transmission of polarity information during tissue morphogenesis and/or in differentiated tissues. Activated by Wnt8. Could have an antagonizing activity in the morphogenesis during development. This Xenopus laevis (African clawed frog) protein is Frizzled-10-B (fzd10-b).